The primary structure comprises 30 residues: Thylakoid lumenal 13.3 kDa protein (30 aa).

It localises to the plastid. The protein resides in the chloroplast thylakoid lumen. This Spinacia oleracea (Spinach) protein is Thylakoid lumenal 13.3 kDa protein.